The following is a 503-amino-acid chain: Maturase K (503 aa).

Belongs to the intron maturase 2 family. MatK subfamily.

It is found in the plastid. It localises to the chloroplast. Functionally, usually encoded in the trnK tRNA gene intron. Probably assists in splicing its own and other chloroplast group II introns. In Caragana arborescens (Siberian pea tree), this protein is Maturase K.